A 336-amino-acid polypeptide reads, in one-letter code: Anthranilate phosphoribosyltransferase (336 aa).

Residues Gly-82, 85–86 (GD), Thr-90, 92–95 (NIST), 110–118 (KHGNRSVSS), and Ser-122 each bind 5-phospho-alpha-D-ribose 1-diphosphate. Gly-82 contacts anthranilate. Ser-94 provides a ligand contact to Mg(2+). Asn-113 contacts anthranilate. Arg-168 is a binding site for anthranilate. Asp-227 and Glu-228 together coordinate Mg(2+).

It belongs to the anthranilate phosphoribosyltransferase family. In terms of assembly, homodimer. The cofactor is Mg(2+).

The enzyme catalyses N-(5-phospho-beta-D-ribosyl)anthranilate + diphosphate = 5-phospho-alpha-D-ribose 1-diphosphate + anthranilate. It participates in amino-acid biosynthesis; L-tryptophan biosynthesis; L-tryptophan from chorismate: step 2/5. Functionally, catalyzes the transfer of the phosphoribosyl group of 5-phosphorylribose-1-pyrophosphate (PRPP) to anthranilate to yield N-(5'-phosphoribosyl)-anthranilate (PRA). The polypeptide is Anthranilate phosphoribosyltransferase (Leptospira interrogans serogroup Icterohaemorrhagiae serovar copenhageni (strain Fiocruz L1-130)).